A 287-amino-acid chain; its full sequence is Energy-coupling factor transporter ATP-binding protein EcfA (287 aa).

The ABC transporter domain occupies 19 to 252 (FEIQNVSFSY…EEFLASSALD (234 aa)). 52–59 (GHNGSGKS) contributes to the ATP binding site.

Belongs to the ABC transporter superfamily. Energy-coupling factor EcfA family. In terms of assembly, forms a stable energy-coupling factor (ECF) transporter complex composed of 2 membrane-embedded substrate-binding proteins (S component), 2 ATP-binding proteins (A component) and 2 transmembrane proteins (T component).

The protein resides in the cell membrane. In terms of biological role, ATP-binding (A) component of a common energy-coupling factor (ECF) ABC-transporter complex. Unlike classic ABC transporters this ECF transporter provides the energy necessary to transport a number of different substrates. The chain is Energy-coupling factor transporter ATP-binding protein EcfA from Malacoplasma penetrans (strain HF-2) (Mycoplasma penetrans).